The primary structure comprises 486 residues: Glutamyl-tRNA(Gln) amidotransferase subunit A (486 aa).

Active-site charge relay system residues include lysine 80 and serine 155. Serine 179 acts as the Acyl-ester intermediate in catalysis.

This sequence belongs to the amidase family. GatA subfamily. In terms of assembly, heterotrimer of A, B and C subunits.

The enzyme catalyses L-glutamyl-tRNA(Gln) + L-glutamine + ATP + H2O = L-glutaminyl-tRNA(Gln) + L-glutamate + ADP + phosphate + H(+). Allows the formation of correctly charged Gln-tRNA(Gln) through the transamidation of misacylated Glu-tRNA(Gln) in organisms which lack glutaminyl-tRNA synthetase. The reaction takes place in the presence of glutamine and ATP through an activated gamma-phospho-Glu-tRNA(Gln). This is Glutamyl-tRNA(Gln) amidotransferase subunit A from Geobacillus sp. (strain WCH70).